The sequence spans 489 residues: Lysine--tRNA ligase (489 aa).

Positions 398 and 405 each coordinate Mg(2+).

It belongs to the class-II aminoacyl-tRNA synthetase family. As to quaternary structure, homodimer. Mg(2+) serves as cofactor.

It is found in the cytoplasm. It catalyses the reaction tRNA(Lys) + L-lysine + ATP = L-lysyl-tRNA(Lys) + AMP + diphosphate. This chain is Lysine--tRNA ligase, found in Moorella thermoacetica (strain ATCC 39073 / JCM 9320).